We begin with the raw amino-acid sequence, 49 residues long: Multidrug efflux pump accessory protein AcrZ (49 aa).

Topologically, residues 1–7 (MLELLKS) are periplasmic. A helical membrane pass occupies residues 8-28 (LVFAVIMVPVVMAIILGLIYG). The Cytoplasmic segment spans residues 29–49 (LGEVFNIFSGVGKKDQPGQNH).

It belongs to the AcrZ family. As to quaternary structure, part of the AcrA-AcrB-AcrZ-TolC efflux pump, interacts directly with AcrB.

It is found in the cell inner membrane. Functionally, acrA-AcrB-AcrZ-TolC is a drug efflux protein complex with a broad substrate specificity. This protein binds to AcrB and is required for efflux of some but not all substrates, suggesting it may influence the specificity of drug export. In Escherichia coli O157:H7, this protein is Multidrug efflux pump accessory protein AcrZ.